Here is a 914-residue protein sequence, read N- to C-terminus: Coatomer subunit beta' (914 aa).

WD repeat units lie at residues 13-54 (SRSD…KDFE), 55-94 (VCDVPVRSARFVARKNWILTGSDDMQIRVFNYNTLEKVHS), 97-136 (AHSDYLRCIAVHPTQPLVLTSSDDMLIKLWNWEKMWACQR), 140-180 (GHTH…ANFT), 183-224 (GHEK…CVQT), 227-266 (GHAQNISAVCFHPELPIVLTGSEDGTVRIWHSGTYRLETC), and 352-390 (ACEIYPQTIAHNPNGRFVVVCGDGEYIIYTSMALRNKAF).

The protein belongs to the WD repeat COPB2 family. In terms of assembly, oligomeric complex that consists of at least the alpha, beta, beta', gamma, delta, epsilon and zeta subunits.

The protein resides in the cytoplasm. It localises to the golgi apparatus membrane. The protein localises to the cytoplasmic vesicle. It is found in the COPI-coated vesicle membrane. In terms of biological role, the coatomer is a cytosolic protein complex that binds to dilysine motifs and reversibly associates with Golgi non-clathrin-coated vesicles, which further mediate biosynthetic protein transport from the ER, via the Golgi up to the trans Golgi network. Coatomer complex is required for budding from Golgi membranes, and is essential for the retrograde Golgi-to-ER transport of dilysine-tagged proteins. The polypeptide is Coatomer subunit beta' (Drosophila melanogaster (Fruit fly)).